The chain runs to 360 residues: Cuticle collagen dpy-2 (360 aa).

Triple-helical region stretches follow at residues 123–152, 174–230, and 238–303; these read GERGPSGDSGLPALPGAPGPDGAPGRPGTT, GPRG…KGRT, and GPPG…PGTC. 2 disordered regions span residues 127 to 158 and 174 to 360; these read PSGDSGLPALPGAPGPDGAPGRPGTTPNASCI and GPRG…IRKW. Gly residues predominate over residues 189 to 198; the sequence is GEYGIGGRPG. Positions 242-258 are enriched in low complexity; the sequence is DSGLPGPWGPPGSAGMP. Residues 273 to 288 are compositionally biased toward pro residues; the sequence is PGPPGAPGPGGMPGPN.

This sequence belongs to the cuticular collagen family. Collagen polypeptide chains are complexed within the cuticle by disulfide bonds and other types of covalent cross-links.

Nematode cuticles are composed largely of collagen-like proteins. The cuticle functions both as an exoskeleton and as a barrier to protect the worm from its environment. Mutations in dpy-2 affects the body shape. This chain is Cuticle collagen dpy-2 (dpy-2), found in Caenorhabditis elegans.